Reading from the N-terminus, the 146-residue chain is MEVIRVKINLCFYAESKLDIMPNHVLGVIIIDNIRSIYGEEGLIAYCMERLVPLCMYKGERTVYNHGRWKLVTHLSYLIDRPTNPMLLRIKEREIEEVMSVHIMDENVGQLYFKLELQQSDFNFLKHKLDPAIKAEGEPPKKVTLI.

The polypeptide is Protein beta (Adelaide River virus (ARV)).